Reading from the N-terminus, the 367-residue chain is Dimethyladenosine transferase 1, mitochondrial (367 aa).

A mitochondrion-targeting transit peptide spans 1 to 16 (MASASRLPPLPALRDF). S-adenosyl-L-methionine contacts are provided by residues 30-33 (QNYL), asparagine 31, leucine 33, glycine 58, glutamate 80, aspartate 106, and asparagine 141.

It belongs to the class I-like SAM-binding methyltransferase superfamily. rRNA adenine N(6)-methyltransferase family. KsgA subfamily.

The protein resides in the mitochondrion. Probable S-adenosyl-L-methionine-dependent methyltransferase which specifically dimethylates mitochondrial 12S rRNA at the conserved stem loop. Also required for basal transcription of mitochondrial DNA. Stimulates transcription independently of the methyltransferase activity. This Caenorhabditis elegans protein is Dimethyladenosine transferase 1, mitochondrial (tfbm-1).